The sequence spans 242 residues: Methylthioribulose-1-phosphate dehydratase (242 aa).

Residues 1–11 (MAQEIQKENND) show a composition bias toward basic and acidic residues. Residues 1–20 (MAQEIQKENNDHLVQSSDPE) form a disordered region. Cys100 is a substrate binding site. Zn(2+)-binding residues include His117 and His119. Glu146 acts as the Proton donor/acceptor in catalysis. Zn(2+) is bound at residue His202.

It belongs to the aldolase class II family. MtnB subfamily. Zn(2+) serves as cofactor.

The protein localises to the cytoplasm. It catalyses the reaction 5-(methylsulfanyl)-D-ribulose 1-phosphate = 5-methylsulfanyl-2,3-dioxopentyl phosphate + H2O. It participates in amino-acid biosynthesis; L-methionine biosynthesis via salvage pathway; L-methionine from S-methyl-5-thio-alpha-D-ribose 1-phosphate: step 2/6. Functionally, catalyzes the dehydration of methylthioribulose-1-phosphate (MTRu-1-P) into 2,3-diketo-5-methylthiopentyl-1-phosphate (DK-MTP-1-P). The sequence is that of Methylthioribulose-1-phosphate dehydratase from Aspergillus niger (strain ATCC MYA-4892 / CBS 513.88 / FGSC A1513).